We begin with the raw amino-acid sequence, 392 residues long: uncharacterized protein (392 aa).

The protein belongs to the chlamydial CPn_0675/CT_696/TC_0068 family.

This is an uncharacterized protein from Chlamydia trachomatis serovar D (strain ATCC VR-885 / DSM 19411 / UW-3/Cx).